A 220-amino-acid chain; its full sequence is Large ribosomal subunit protein uL3 (220 aa).

The tract at residues 61 to 81 is disordered; sequence KGSKSNKYANKPAEGHAKKAD.

Belongs to the universal ribosomal protein uL3 family. In terms of assembly, part of the 50S ribosomal subunit. Forms a cluster with proteins L14 and L19.

One of the primary rRNA binding proteins, it binds directly near the 3'-end of the 23S rRNA, where it nucleates assembly of the 50S subunit. This Staphylococcus epidermidis (strain ATCC 12228 / FDA PCI 1200) protein is Large ribosomal subunit protein uL3.